The following is a 575-amino-acid chain: Chaperonin 60 subunit alpha 2, chloroplastic (575 aa).

A compositionally biased stretch (low complexity) spans 1 to 18 (MFAVSPSSFSPTTISPRR). Positions 1 to 27 (MFAVSPSSFSPTTISPRRSGQRNEPRK) are disordered. A chloroplast-targeting transit peptide spans 1-32 (MFAVSPSSFSPTTISPRRSGQRNEPRKFSVVR).

Belongs to the chaperonin (HSP60) family. As to quaternary structure, part of the Cpn60 complex composed of 7 alpha and 7 beta subunits.

The protein localises to the plastid. It is found in the chloroplast. In terms of biological role, involved in protein assisted folding. The sequence is that of Chaperonin 60 subunit alpha 2, chloroplastic (CPN60A2) from Arabidopsis thaliana (Mouse-ear cress).